The chain runs to 124 residues: Small ribosomal subunit protein bS6 (124 aa).

The protein belongs to the bacterial ribosomal protein bS6 family.

In terms of biological role, binds together with bS18 to 16S ribosomal RNA. This chain is Small ribosomal subunit protein bS6, found in Actinobacillus pleuropneumoniae serotype 5b (strain L20).